Consider the following 234-residue polypeptide: Ubiquinone biosynthesis O-methyltransferase (234 aa).

Residues Arg-40, Gly-59, Asp-80, and Met-123 each coordinate S-adenosyl-L-methionine.

The protein belongs to the methyltransferase superfamily. UbiG/COQ3 family.

The catalysed reaction is a 3-demethylubiquinol + S-adenosyl-L-methionine = a ubiquinol + S-adenosyl-L-homocysteine + H(+). It catalyses the reaction a 3-(all-trans-polyprenyl)benzene-1,2-diol + S-adenosyl-L-methionine = a 2-methoxy-6-(all-trans-polyprenyl)phenol + S-adenosyl-L-homocysteine + H(+). The protein operates within cofactor biosynthesis; ubiquinone biosynthesis. Functionally, O-methyltransferase that catalyzes the 2 O-methylation steps in the ubiquinone biosynthetic pathway. This Coxiella burnetii (strain CbuG_Q212) (Coxiella burnetii (strain Q212)) protein is Ubiquinone biosynthesis O-methyltransferase.